The following is a 1213-amino-acid chain: Protein jagged-1b (1213 aa).

Positions 1-26 (MILRRSSVFSAFYLHAFLLCLRTTVS) are cleaved as a signal peptide. Topologically, residues 27–1064 (DASGHFELEI…HQIPSPKTDY (1038 aa)) are extracellular. Asparagine 139 carries N-linked (GlcNAc...) asparagine glycosylation. The DSL domain maps to 182 to 226 (VTCLEHYYGFGCNKFCRPRDEFFGHYTCDQNGNKTCLEGWTGPDC). 2 disulfide bridges follow: cysteine 184/cysteine 193 and cysteine 197/cysteine 209. The N-linked (GlcNAc...) asparagine glycan is linked to asparagine 214. 39 cysteine pairs are disulfide-bonded: cysteine 217–cysteine 226, cysteine 231–cysteine 242, cysteine 235–cysteine 248, cysteine 250–cysteine 259, cysteine 262–cysteine 273, cysteine 268–cysteine 279, cysteine 281–cysteine 290, cysteine 297–cysteine 309, cysteine 303–cysteine 319, cysteine 321–cysteine 330, cysteine 337–cysteine 348, cysteine 342–cysteine 357, cysteine 359–cysteine 368, cysteine 375–cysteine 386, cysteine 380–cysteine 395, cysteine 397–cysteine 406, cysteine 413–cysteine 424, cysteine 418–cysteine 433, cysteine 435–cysteine 444, cysteine 451–cysteine 461, cysteine 455–cysteine 470, cysteine 472–cysteine 481, cysteine 488–cysteine 499, cysteine 493–cysteine 508, cysteine 510–cysteine 519, cysteine 526–cysteine 537, cysteine 531–cysteine 546, cysteine 548–cysteine 557, cysteine 596–cysteine 612, cysteine 614–cysteine 623, cysteine 630–cysteine 641, cysteine 635–cysteine 650, cysteine 652–cysteine 661, cysteine 668–cysteine 679, cysteine 673–cysteine 688, cysteine 690–cysteine 699, cysteine 706–cysteine 717, cysteine 711–cysteine 726, and cysteine 728–cysteine 737. Residues 227–260 (NTAICRQGCSTEHGSCKQPGGCKCLYGWQGPYCD) form the EGF-like 1 domain. In terms of domain architecture, EGF-like 2; atypical spans 261-291 (KCIPHPGCVHGTCVEPWQCLCDTNWGGQLCD). EGF-like domains follow at residues 293–331 (DLNY…VNCE) and 333–369 (AEHA…TSCE). Residues 371–407 (NVDDCTPNQCKHGGTCQDLVNGFKCACPPHWTGKTCQ) enclose the EGF-like 5; calcium-binding domain. The EGF-like 6; calcium-binding domain occupies 409–445 (DANECEDKPCVNAKSCHNLIGAYFCECLPGWSGQNCD). The EGF-like 7; calcium-binding domain maps to 447 to 482 (NINDCKGQCLNGGTCKDLVNGYRCLCPPGYTGEQCE). In terms of domain architecture, EGF-like 8; calcium-binding spans 484-520 (DVDECASSPCLNGGRCQDEVNGFQCLCPAGFSGQLCQ). 2 EGF-like domains span residues 522–558 (DIDY…KNCS) and 592–624 (SSNV…TYCH). Residue asparagine 556 is glycosylated (N-linked (GlcNAc...) asparagine). One can recognise an EGF-like 11; calcium-binding domain in the interval 626-662 (NINDCESNPCRNGGTCIDKVNVYQCICADGWEGVHCE). The EGF-like 12; calcium-binding domain maps to 664–700 (NIDDCSLNPCLNKGACQDLVNDFYCECRNGWKGKTCH). In terms of domain architecture, EGF-like 13 spans 702 to 738 (RDSQCDEATCNNGGTCHDEGDTFKCRCSPGWEGATCN). The N-linked (GlcNAc...) asparagine glycan is linked to asparagine 742. 9 disulfides stabilise this stretch: cysteine 745-cysteine 756, cysteine 750-cysteine 765, cysteine 767-cysteine 776, cysteine 783-cysteine 794, cysteine 788-cysteine 803, cysteine 805-cysteine 814, cysteine 821-cysteine 832, cysteine 826-cysteine 841, and cysteine 843-cysteine 852. One can recognise an EGF-like 14 domain in the interval 746–777 (LPNPCENGGTCVVNGDSFNCVCKEGWEGSTCT). Residues 779-815 (NTNDCNPHPCYNSGTCVDGENWYRCECAPGFAGPDCR) enclose the EGF-like 15; calcium-binding domain. One can recognise an EGF-like 16; calcium-binding domain in the interval 817–853 (NINECQSSPCAFGSTCVDEINGYRCLCPPGRIGPDCQ). In terms of domain architecture, VWFC spans 860 to 914 (CIANGQVTADGAKWEEDCNICQCQNGRIHCTMMWCGPKSCRIGKARGGCPASQSC). The EGF-like 17 domain occupies 918–956 (KEEQCFVKPCPSLGECWPSAPPPPSKCHASFSYQDDSCA). N-linked (GlcNAc...) asparagine glycans are attached at residues asparagine 957, asparagine 988, and asparagine 1042. A helical transmembrane segment spans residues 1065–1087 (LVPLLSSIFIVLWIFALASAFLW). The Cytoplasmic segment spans residues 1088-1213 (CIHRRRKQNT…QSLNRMEYIV (126 aa)). A disordered region spans residues 1181-1202 (EERAPNKNPNWTNKQDNRDLET).

Its subcellular location is the membrane. It localises to the cell membrane. In terms of biological role, ligand for Notch receptors and involved in the mediation of Notch signaling. Seems to be involved in cell-fate decisions. The protein is Protein jagged-1b (jag1b) of Danio rerio (Zebrafish).